We begin with the raw amino-acid sequence, 279 residues long: Lectin 9 (279 aa).

The first 23 residues, M1–S23, serve as a signal peptide directing secretion. N-linked (GlcNAc...) asparagine glycans are attached at residues N116, N139, N235, and N272.

Belongs to the leguminous lectin family.

May be involved in arbuscular mycorrhizal (AM) symbiosis with AM fungi. This Medicago truncatula (Barrel medic) protein is Lectin 9.